The chain runs to 253 residues: MKVLATLLASVGLVAAHGYVDNATIGGQYYQMLTVSQFYQPYMDPYMGNNKPQRVSRSIPGNGPVENVDSIDVQCNAGSVPAPLHAPAAAGSTVTLHWTLWPDSHMGPVITYMARCPDSGCQNWSPGTSYVPRCPNVVRINANLSKGPSGSKSSKVAYTIPSCIRPGYYLVRHEIIALHAAWAYPGAQFYPGCHQLQVTGGGSTNPTNLVSFPGAYKSTDPGVTYDAYKEIETDMDLSIAQAYTIPGPAVFTC.

An N-terminal signal peptide occupies residues 1 to 16; sequence MKVLATLLASVGLVAA. Cu(2+) is bound at residue H17. Residue N22 is glycosylated (N-linked (GlcNAc...) asparagine). Disulfide bonds link C75–C193 and C163–C253. Position 105 (H105) interacts with Cu(2+). A glycan (N-linked (GlcNAc...) asparagine) is linked at N143. Residues H179 and Q188 each coordinate O2. Y190 provides a ligand contact to Cu(2+).

This sequence belongs to the polysaccharide monooxygenase AA9 family. Requires Cu(2+) as cofactor.

The protein localises to the secreted. The catalysed reaction is [(1-&gt;4)-beta-D-glucosyl]n+m + reduced acceptor + O2 = 4-dehydro-beta-D-glucosyl-[(1-&gt;4)-beta-D-glucosyl]n-1 + [(1-&gt;4)-beta-D-glucosyl]m + acceptor + H2O.. In terms of biological role, lytic polysaccharide monooxygenase (LPMO) that depolymerizes crystalline and amorphous polysaccharides via the oxidation of scissile alpha- or beta-(1-4)-glycosidic bonds, yielding C1 or C4 oxidation products. Catalysis by LPMOs requires the reduction of the active-site copper from Cu(II) to Cu(I) by a reducing agent and H(2)O(2) or O(2) as a cosubstrate. The polypeptide is AA9 family lytic polysaccharide monooxygenase F (Podospora anserina (strain S / ATCC MYA-4624 / DSM 980 / FGSC 10383) (Pleurage anserina)).